Consider the following 27-residue polypeptide: Conotoxin as14a (27 aa).

Disulfide bonds link cysteine 6–cysteine 26 and cysteine 10–cysteine 22.

It belongs to the conotoxin L superfamily. As to expression, expressed by the venom duct.

Its subcellular location is the secreted. In terms of biological role, in vivo, intracranial injection, elicits scratching and grooming activity in mice. The protein is Conotoxin as14a of Conus cancellatus (Cancellate cone).